A 114-amino-acid polypeptide reads, in one-letter code: Amphinase-1 (114 aa).

Residue His15 is the Proton acceptor of the active site. 4 disulfides stabilise this stretch: Cys26/Cys79, Cys41/Cys85, Cys59/Cys100, and Cys97/Cys114. An N-linked (GlcNAc...) asparagine glycan is attached at Asn27. A substrate-binding site is contributed by Lys42–Thr46. N-linked (GlcNAc...) asparagine glycosylation is found at Asn67 and Asn91. The Proton donor role is filled by His107.

The protein belongs to the pancreatic ribonuclease family. In terms of assembly, monomer. In terms of processing, there are at least five different forms arising from glycan heterogeneity.

Its subcellular location is the secreted. Its function is as follows. Endonuclease, hydrolyzes highly polymerized RNA, poly(U) and poly(C), and the dinucleotides CpA and UpA. More active towards rCA than rUA or rUG. Has cytotoxic activity against cultured human submaxillary gland carcinoma cells. The protein is Amphinase-1 of Lithobates pipiens (Northern leopard frog).